Reading from the N-terminus, the 165-residue chain is UPF0669 protein v1g209471 (165 aa).

The N-terminal stretch at 1–23 (MQGRYSAPLFLLLWLFFLHGTLC) is a signal peptide. Asn-38 is a glycosylation site (N-linked (GlcNAc...) asparagine).

The protein belongs to the UPF0669 family.

It is found in the secreted. The sequence is that of UPF0669 protein v1g209471 from Nematostella vectensis (Starlet sea anemone).